Reading from the N-terminus, the 153-residue chain is 6,7-dimethyl-8-ribityllumazine synthase (153 aa).

Residues phenylalanine 22, 56–58 (AFE), and 80–82 (TVI) contribute to the 5-amino-6-(D-ribitylamino)uracil site. Residue 85–86 (ST) participates in (2S)-2-hydroxy-3-oxobutyl phosphate binding. Catalysis depends on histidine 88, which acts as the Proton donor. Residue phenylalanine 113 coordinates 5-amino-6-(D-ribitylamino)uracil. Arginine 127 serves as a coordination point for (2S)-2-hydroxy-3-oxobutyl phosphate.

The protein belongs to the DMRL synthase family. As to quaternary structure, forms an icosahedral capsid composed of 60 subunits, arranged as a dodecamer of pentamers.

The enzyme catalyses (2S)-2-hydroxy-3-oxobutyl phosphate + 5-amino-6-(D-ribitylamino)uracil = 6,7-dimethyl-8-(1-D-ribityl)lumazine + phosphate + 2 H2O + H(+). Its pathway is cofactor biosynthesis; riboflavin biosynthesis; riboflavin from 2-hydroxy-3-oxobutyl phosphate and 5-amino-6-(D-ribitylamino)uracil: step 1/2. Functionally, catalyzes the formation of 6,7-dimethyl-8-ribityllumazine by condensation of 5-amino-6-(D-ribitylamino)uracil with 3,4-dihydroxy-2-butanone 4-phosphate. This is the penultimate step in the biosynthesis of riboflavin. In Actinobacillus pleuropneumoniae serotype 3 (strain JL03), this protein is 6,7-dimethyl-8-ribityllumazine synthase.